A 142-amino-acid polypeptide reads, in one-letter code: E1B protein, small T-antigen (142 aa).

It belongs to the adenoviridae E1B 19 kDa protein family.

The protein localises to the host cell membrane. Its subcellular location is the host nucleus envelope. The protein resides in the host nucleus lamina. Its function is as follows. Putative adenovirus Bcl-2 homolog that inhibits apoptosis induced by TNF or FAS pathways, as well as p53-mediated apoptosis. Without E1B 19K function, virus production is compromised because of premature death of host cell. Interacts with Bax protein in cell lysates. In Homo sapiens (Human), this protein is E1B protein, small T-antigen.